Here is a 158-residue protein sequence, read N- to C-terminus: Crossover junction endodeoxyribonuclease RuvC (158 aa).

Catalysis depends on residues Asp7, Glu67, and Asp139. 3 residues coordinate Mg(2+): Asp7, Glu67, and Asp139.

The protein belongs to the RuvC family. Homodimer which binds Holliday junction (HJ) DNA. The HJ becomes 2-fold symmetrical on binding to RuvC with unstacked arms; it has a different conformation from HJ DNA in complex with RuvA. In the full resolvosome a probable DNA-RuvA(4)-RuvB(12)-RuvC(2) complex forms which resolves the HJ. Mg(2+) serves as cofactor.

It is found in the cytoplasm. It carries out the reaction Endonucleolytic cleavage at a junction such as a reciprocal single-stranded crossover between two homologous DNA duplexes (Holliday junction).. The RuvA-RuvB-RuvC complex processes Holliday junction (HJ) DNA during genetic recombination and DNA repair. Endonuclease that resolves HJ intermediates. Cleaves cruciform DNA by making single-stranded nicks across the HJ at symmetrical positions within the homologous arms, yielding a 5'-phosphate and a 3'-hydroxyl group; requires a central core of homology in the junction. The consensus cleavage sequence is 5'-(A/T)TT(C/G)-3'. Cleavage occurs on the 3'-side of the TT dinucleotide at the point of strand exchange. HJ branch migration catalyzed by RuvA-RuvB allows RuvC to scan DNA until it finds its consensus sequence, where it cleaves and resolves the cruciform DNA. This chain is Crossover junction endodeoxyribonuclease RuvC, found in Prochlorococcus marinus (strain MIT 9211).